The chain runs to 209 residues: Peroxynitrite isomerase 2 (209 aa).

The short motif at 56-62 (GVWRGEG) is the GXWXGXG element. Heme b contacts are provided by lysine 172 and histidine 199.

This sequence belongs to the nitrobindin family. Homodimer. Heme b is required as a cofactor.

It carries out the reaction peroxynitrite = nitrate. Its pathway is nitrogen metabolism. Functionally, heme-binding protein able to scavenge peroxynitrite and to protect free L-tyrosine against peroxynitrite-mediated nitration, by acting as a peroxynitrite isomerase that converts peroxynitrite to nitrate. Therefore, this protein likely plays a role in peroxynitrite sensing and in the detoxification of reactive nitrogen and oxygen species (RNS and ROS, respectively). Is able to bind nitric oxide (NO) in vitro, but may act as a sensor of peroxynitrite levels in vivo. This is Peroxynitrite isomerase 2 from Mycolicibacterium vanbaalenii (strain DSM 7251 / JCM 13017 / BCRC 16820 / KCTC 9966 / NRRL B-24157 / PYR-1) (Mycobacterium vanbaalenii).